A 131-amino-acid polypeptide reads, in one-letter code: Fumarate reductase subunit C (131 aa).

3 helical membrane passes run 30 to 50, 61 to 81, and 110 to 130; these read EGTAVPTVWFSIVLIYGLFAL, IGFLQNPVVVILNLITLAAAL, and IKGLWVVTAVVTVVILFVALF.

The protein belongs to the FrdC family. As to quaternary structure, part of an enzyme complex containing four subunits: a flavoprotein (FrdA), an iron-sulfur protein (FrdB), and two hydrophobic anchor proteins (FrdC and FrdD).

The protein localises to the cell inner membrane. Its function is as follows. Two distinct, membrane-bound, FAD-containing enzymes are responsible for the catalysis of fumarate and succinate interconversion; fumarate reductase is used in anaerobic growth, and succinate dehydrogenase is used in aerobic growth. Anchors the catalytic components of the fumarate reductase complex to the cell inner membrane, binds quinones. This is Fumarate reductase subunit C from Klebsiella pneumoniae subsp. pneumoniae (strain ATCC 700721 / MGH 78578).